The following is a 933-amino-acid chain: Progesterone receptor (933 aa).

An AF3; mediates transcriptional activation region spans residues 1–164 (MTELKAKGPR…PATQGVLSPL (164 aa)). The interval 1-256 (MTELKAKGPR…AAAGGGAAAV (256 aa)) is disordered. A modulating, Pro-Rich region spans residues 1–566 (MTELKAKGPR…YSFESLPQKI (566 aa)). A Phosphoserine modification is found at Ser-20. Residues 55-59 (LDGLL) carry the LXXL motif 1 motif. A Phosphoserine modification is found at Ser-81. The short motif at 115 to 119 (LDTLL) is the LXXL motif 2 element. 2 positions are modified to phosphoserine: Ser-130 and Ser-162. The mediates transcriptional transrepression stretch occupies residues 165-305 (MSRSGCKAGD…LATTMMDFIH (141 aa)). The Nuclear localization signal motif lies at 183-187 (KVLPR). Phosphoserine is present on residues Ser-190 and Ser-213. Residues 220–231 (EVEEEDGSESEE) show a composition bias toward acidic residues. The segment covering 232–246 (SAGPLLKGKPRALGG) has biased composition (low complexity). A Phosphoserine; by MAPK1 modification is found at Ser-294. The segment covering 335 to 356 (AXSAFAPPRSSPSASSTPVAVG) has biased composition (low complexity). Residues 335-378 (AXSAFAPPRSSPSASSTPVAVGDFPDCAYPPDAEPKDDAYPLYS) form a disordered region. The residue at position 345 (Ser-345) is a Phosphoserine; by MAPK. Lys-388 participates in a covalent cross-link: Glycyl lysine isopeptide (Lys-Gly) (interchain with G-Cter in SUMO); alternate. Lys-388 is covalently cross-linked (Glycyl lysine isopeptide (Lys-Gly) (interchain with G-Cter in ubiquitin); alternate). Ser-400 is subject to Phosphoserine; by CDK2. The tract at residues 415 to 452 (PDFPLGPPPPLPPRAPPSRPGEAAVTAAPASASVSSAS) is disordered. Residues 418–433 (PLGPPPPLPPRAPPSR) show a composition bias toward pro residues. Residues 434–452 (PGEAAVTAAPASASVSSAS) are compositionally biased toward low complexity. The AF1; mediates transcriptional activation stretch occupies residues 456 to 546 (STLECILYKA…VYPPYLNYLR (91 aa)). A Glycyl lysine isopeptide (Lys-Gly) (interchain with G-Cter in SUMO) cross-link involves residue Lys-531. 2 NR C4-type zinc fingers span residues 567–587 (CLIC…CGSC) and 603–627 (CAGR…LRKC). Residues 567-639 (CLICGDEASG…AGMVLGGRKF (73 aa)) constitute a DNA-binding region (nuclear receptor). Ser-676 carries the post-translational modification Phosphoserine. The NR LBD domain occupies 679 to 913 (QDIQLIPPLI…EFPEMMSEVI (235 aa)). The AF2; mediates transcriptional activation stretch occupies residues 687–933 (LINLLMSIEP…MVKPLLFHKK (247 aa)). Arg-766 contacts progesterone.

This sequence belongs to the nuclear hormone receptor family. Interacts with SMARD1 and UNC45A. Interacts with CUEDC2; the interaction promotes ubiquitination, decreases sumoylation, and represses transcriptional activity. Interacts with PIAS3; the interaction promotes sumoylation of PR in a hormone-dependent manner, inhibits DNA-binding, and alters nuclear export. Interacts with SP1; the interaction requires ligand-induced phosphorylation on Ser-345 by ERK1/2-MAPK. Interacts with PRMT2. Interacts with NCOA2 and NCOA1. Interacts with KLF9. Interacts with GTF2B. Post-translationally, phosphorylated on multiple serine sites. Several of these sites are hormone-dependent. Phosphorylation on Ser-294 is highly hormone-dependent and modulates ubiquitination and sumoylation on Lys-388. Phosphorylation on Ser-102 and Ser-345 requires induction by hormone. Basal phosphorylation on Ser-81, Ser-162, Ser-190 and Ser-400 is increased in response to progesterone and can be phosphorylated in vitro by the CDK2-A1 complex. Increased levels of phosphorylation on Ser-400 also in the presence of EGF, heregulin, IGF, PMA and FBS. Phosphorylation at this site by CDK2 is ligand-independent, and increases nuclear translocation and transcriptional activity. Phosphorylation at Ser-162 and Ser-294, but not at Ser-190, is impaired during the G(2)/M phase of the cell cycle. Phosphorylation on Ser-345 by ERK1/2 MAPK is required for interaction with SP1. In terms of processing, sumoylation is hormone-dependent and represses transcriptional activity. Sumoylation on all three sites is enhanced by PIAS3. Desumoylated by SENP1. Sumoylation on Lys-388, the main site of sumoylation, is repressed by ubiquitination on the same site, and modulated by phosphorylation at Ser-294. Ubiquitination is hormone-dependent and represses sumoylation on the same site. Promoted by MAPK-mediated phosphorylation on Ser-294. Ubiquitinated by UBR5, leading to its degradation: UBR5 specifically recognizes and binds ligand-bound PGR when it is not associated with coactivators (NCOAs). In presence of NCOAs, the UBR5-degron is not accessible, preventing its ubiquitination and degradation. Post-translationally, palmitoylated by ZDHHC7 and ZDHHC21. Palmitoylation is required for plasma membrane targeting and for rapid intracellular signaling via ERK and AKT kinases and cAMP generation.

Its subcellular location is the nucleus. The protein resides in the cytoplasm. Its function is as follows. The steroid hormones and their receptors are involved in the regulation of eukaryotic gene expression and affect cellular proliferation and differentiation in target tissues. Transcriptional activator of several progesteron-dependent promoters in a variety of cell types. Involved in activation of SRC-dependent MAPK signaling on hormone stimulation. The polypeptide is Progesterone receptor (PGR) (Pan troglodytes (Chimpanzee)).